A 434-amino-acid polypeptide reads, in one-letter code: Cysteine proteinase 6 (434 aa).

The signal sequence occupies residues 1-19 (MKVLSALCVLLVSVATAKQ). The propeptide at 20-113 (QLSELQYRNA…SEKVFGGVQA (94 aa)) is activation peptide. Disulfide bonds link cysteine 133-cysteine 178 and cysteine 169-cysteine 211. The active site involves cysteine 136. Residue asparagine 227 is glycosylated (N-linked (GlcNAc...) asparagine). Cysteine 269 and cysteine 416 form a disulfide bridge. The active site involves histidine 276. The interval 285–384 (SGSSGSQSQS…GGNSNSGDYP (100 aa)) is disordered. Positions 288 to 347 (SGSQSQSAGSQSQSSNNNWSESSQSQDSNSWSQSSQSQSSQDSNSWSQSSQSQGSNSFTG) are enriched in low complexity. Residue asparagine 305 is glycosylated (N-linked (GlcNAc...) asparagine). A compositionally biased stretch (gly residues) spans 348–358 (AGTGSGSGSVS). Over residues 359–381 (GSGSASGSSSFSGSSNGGNSNSG) the composition is skewed to low complexity. Residue asparagine 394 is part of the active site.

The protein belongs to the peptidase C1 family.

The protein resides in the lysosome. In Dictyostelium discoideum (Social amoeba), this protein is Cysteine proteinase 6 (cprF).